A 515-amino-acid polypeptide reads, in one-letter code: Putative ribose/galactose/methyl galactoside import ATP-binding protein (515 aa).

2 ABC transporter domains span residues 26 to 262 and 272 to 511; these read LEVA…VGRE and VALG…KIMD. 58–65 is an ATP binding site; the sequence is GENGAGKS.

The protein belongs to the ABC transporter superfamily. Carbohydrate importer 2 (CUT2) (TC 3.A.1.2) family.

The protein resides in the cell inner membrane. It catalyses the reaction D-ribose(out) + ATP + H2O = D-ribose(in) + ADP + phosphate + H(+). The catalysed reaction is D-galactose(out) + ATP + H2O = D-galactose(in) + ADP + phosphate + H(+). Part of an ABC transporter complex involved in carbohydrate import. Could be involved in ribose, galactose and/or methyl galactoside import. Responsible for energy coupling to the transport system. The sequence is that of Putative ribose/galactose/methyl galactoside import ATP-binding protein from Hahella chejuensis (strain KCTC 2396).